The chain runs to 280 residues: MQQPFNYPYPQIYWVDSSASSPWAPPGTVLPCPTSVPRRPGQRRPPPPPPPPPLPPPPPSPLPPLPLPPLKKRGNHSTGLCLLVMFFMVLVALVGLGLGMFQLFHLQKELAELRESTSQKHTASSLEKQIGHPSPPPEKKEQRKVAHLTGKPNSRSMPLEWEDTYGIVLLSGVKYKKGGLVINETGLYFVYSKVYFRGQSCTNLPLSHKVYMRNSKYPQDLVMMEGKMMSYCTTGQMWAHSSYLGAVFNLTSADHLYVNVSELSLVNFEESQTFFGLYKL.

At 1 to 80 (MQQPFNYPYP…KKRGNHSTGL (80 aa)) the chain is on the cytoplasmic side. Residues 20-70 (SSPWAPPGTVLPCPTSVPRRPGQRRPPPPPPPPPLPPPPPSPLPPLPLPPL) form a disordered region. Over residues 43-69 (RRPPPPPPPPPLPPPPPSPLPPLPLPP) the composition is skewed to pro residues. Residues 81-101 (CLLVMFFMVLVALVGLGLGMF) traverse the membrane as a helical; Signal-anchor for type II membrane protein segment. The Extracellular segment spans residues 102–280 (QLFHLQKELA…SQTFFGLYKL (179 aa)). The disordered stretch occupies residues 117–155 (TSQKHTASSLEKQIGHPSPPPEKKEQRKVAHLTGKPNSR). The THD domain maps to 144–280 (KVAHLTGKPN…SQTFFGLYKL (137 aa)). The N-linked (GlcNAc...) asparagine glycan is linked to Asn183. A disulfide bridge links Cys201 with Cys232. N-linked (GlcNAc...) asparagine glycosylation is found at Asn249 and Asn259.

Belongs to the tumor necrosis factor family. In terms of assembly, homotrimer. Interacts with ARHGAP9, BAIAP2L1, BTK, CACNB3, CACNB4, CRK, DLG2, DNMBP, DOCK4, EPS8L3, FGR, FYB1, FYN, HCK, ITK, ITSN2, KALRN, LYN, MACC1, MIA, MPP4, MYO15A, NCF1, NCK1, NCK2, NCKIPSD, OSTF1, PIK3R1, PSTPIP1, RIMBP3C, SAMSN1, SH3GL3, SH3PXD2B, SH3PXD2A, SH3RF2, SKAP2, SNX33, SNX9, SORBS3, SPTA1, SRC, SRGAP1, SRGAP2, SRGAP3, TEC, TJP3 and YES1. In terms of processing, the soluble form derives from the membrane form by proteolytic processing. The membrane-bound form undergoes two successive intramembrane proteolytic cleavages. The first one is processed by ADAM10 producing an N-terminal fragment, which lacks the receptor-binding extracellular domain. This ADAM10-processed FasL (FasL APL) remnant form is still membrane anchored and further processed by SPPL2A that liberates the FasL intracellular domain (FasL ICD). FasL shedding by ADAM10 is a prerequisite for subsequent intramembrane cleavage by SPPL2A in T-cells. Post-translationally, phosphorylated by FGR on tyrosine residues; this is required for ubiquitination and subsequent internalization. N-glycosylated. Glycosylation enhances apoptotic activity. In terms of processing, monoubiquitinated.

It is found in the cell membrane. It localises to the cytoplasmic vesicle lumen. The protein resides in the lysosome lumen. Its subcellular location is the secreted. The protein localises to the nucleus. Cytokine that binds to TNFRSF6/FAS, a receptor that transduces the apoptotic signal into cells. Involved in cytotoxic T-cell-mediated apoptosis, natural killer cell-mediated apoptosis and in T-cell development. Initiates fratricidal/suicidal activation-induced cell death (AICD) in antigen-activated T-cells contributing to the termination of immune responses. TNFRSF6/FAS-mediated apoptosis has also a role in the induction of peripheral tolerance. Binds to TNFRSF6B/DcR3, a decoy receptor that blocks apoptosis. Its function is as follows. Induces FAS-mediated activation of NF-kappa-B, initiating non-apoptotic signaling pathways. Can induce apoptosis but does not appear to be essential for this process. Functionally, cytoplasmic form induces gene transcription inhibition. This is Tumor necrosis factor ligand superfamily member 6 (FASLG) from Macaca fascicularis (Crab-eating macaque).